Consider the following 385-residue polypeptide: SWI/SNF-related matrix-associated actin-dependent regulator of chromatin subfamily B member 1 (385 aa).

Residues 1–113 are DNA-binding; the sequence is MMMMALSKTF…DEKYKAVSIS (113 aa). Residues Lys-106, Lys-108, and Lys-124 each participate in a glycyl lysine isopeptide (Lys-Gly) (interchain with G-Cter in SUMO2) cross-link. Phosphoserine is present on Ser-129. Residue Lys-161 forms a Glycyl lysine isopeptide (Lys-Gly) (interchain with G-Cter in SUMO2) linkage. The HIV-1 integrase-binding stretch occupies residues 183 to 243; the sequence is PEVLVPIRLD…VPAIASAIRQ (61 aa). 2 tandem repeats follow at residues 186–245 and 259–319. The tract at residues 186–245 is MYC-binding; the sequence is LVPIRLDMEIDGQKLRDAFTWNMNEKLMTPEMFSEILCDDLDLNPLTFVPAIASAIRQQI. A 2 X approximate tandem repeats region spans residues 186–319; it reads LVPIRLDMEI…TIAYSIRGQL (134 aa). Residues 304-318 form an interaction with PPP1R15A region; sequence GGEFVTTIAYSIRGQ.

The protein belongs to the SNF5 family. As to quaternary structure, component of the multiprotein chromatin-remodeling complexes SWI/SNF: SWI/SNF-A (BAF), SWI/SNF-B (PBAF) and related complexes. The canonical complex contains a catalytic subunit (either SMARCA4/BRG1/BAF190A or SMARCA2/BRM/BAF190B) and at least SMARCE1, ACTL6A/BAF53, SMARCC1/BAF155, SMARCC2/BAF170, and SMARCB1/SNF5/BAF47. Other subunits specific to each of the complexes may also be present permitting several possible combinations developmentally and tissue specific. Component of the BAF complex, which includes at least actin (ACTB), ARID1A/BAF250A, ARID1B/BAF250B, SMARCA2/BRM, SMARCA4/BRG1/BAF190A, ACTL6A/BAF53, ACTL6B/BAF53B, SMARCE1/BAF57 SMARCC1/BAF155, SMARCC2/BAF170, SMARCB1/SNF5/INI1, and one or more SMARCD1/BAF60A, SMARCD2/BAF60B, or SMARCD3/BAF60C. In muscle cells, the BAF complex also contains DPF3. Component of neural progenitors-specific chromatin remodeling complex (npBAF complex) composed of at least, ARID1A/BAF250A or ARID1B/BAF250B, SMARCD1/BAF60A, SMARCD3/BAF60C, SMARCA2/BRM/BAF190B, SMARCA4/BRG1/BAF190A, SMARCB1/BAF47, SMARCC1/BAF155, SMARCE1/BAF57, SMARCC2/BAF170, PHF10/BAF45A, ACTL6A/BAF53A and actin. Component of neuron-specific chromatin remodeling complex (nBAF complex) composed of at least, ARID1A/BAF250A or ARID1B/BAF250B, SMARCD1/BAF60A, SMARCD3/BAF60C, SMARCA2/BRM/BAF190B, SMARCA4/BRG1/BAF190A, SMARCB1/BAF47, SMARCC1/BAF155, SMARCE1/BAF57, SMARCC2/BAF170, DPF1/BAF45B, DPF3/BAF45C, ACTL6B/BAF53B and actin. Component of the SWI/SNF-B (PBAF) chromatin remodeling complex, at least composed of SMARCA4/BRG1, SMARCB1/BAF47/SNF5, ACTL6A/BAF53A or ACTL6B/BAF53B, SMARCE1/BAF57, SMARCD1/BAF60A, SMARCD2/BAF60B, perhaps SMARCD3/BAF60C, SMARCC1/BAF155, SMARCC2/BAF170, PBRM1/BAF180, ARID2/BAF200 and actin. Binds to double-stranded DNA. Interacts with CEBPB (when not methylated). Interacts with PIH1D1. Interacts with MYK and MAEL. Interacts with PPP1R15A. Interacts with DPF2. Interacts with YWHAZ. Interacts with ERCC6. Interacts with FOS, FOSB isoform 1 and 2, FOSL1 and FOSL2. In terms of assembly, (Microbial infection) Binds tightly to the human immunodeficiency virus-type 1 (HIV-1) integrase in vitro and stimulates its DNA-joining activity. Interacts with human papillomavirus 18 E1 protein to stimulate its viral replication. Interacts with Epstein-Barr virus protein EBNA-2.

The protein localises to the nucleus. Core component of the BAF (hSWI/SNF) complex. This ATP-dependent chromatin-remodeling complex plays important roles in cell proliferation and differentiation, in cellular antiviral activities and inhibition of tumor formation. The BAF complex is able to create a stable, altered form of chromatin that constrains fewer negative supercoils than normal. This change in supercoiling would be due to the conversion of up to one-half of the nucleosomes on polynucleosomal arrays into asymmetric structures, termed altosomes, each composed of 2 histones octamers. Stimulates in vitro the remodeling activity of SMARCA4/BRG1/BAF190A. Involved in activation of CSF1 promoter. Belongs to the neural progenitors-specific chromatin remodeling complex (npBAF complex) and the neuron-specific chromatin remodeling complex (nBAF complex). During neural development a switch from a stem/progenitor to a postmitotic chromatin remodeling mechanism occurs as neurons exit the cell cycle and become committed to their adult state. The transition from proliferating neural stem/progenitor cells to postmitotic neurons requires a switch in subunit composition of the npBAF and nBAF complexes. As neural progenitors exit mitosis and differentiate into neurons, npBAF complexes which contain ACTL6A/BAF53A and PHF10/BAF45A, are exchanged for homologous alternative ACTL6B/BAF53B and DPF1/BAF45B or DPF3/BAF45C subunits in neuron-specific complexes (nBAF). The npBAF complex is essential for the self-renewal/proliferative capacity of the multipotent neural stem cells. The nBAF complex along with CREST plays a role regulating the activity of genes essential for dendrite growth. Plays a key role in cell-cycle control and causes cell cycle arrest in G0/G1. The polypeptide is SWI/SNF-related matrix-associated actin-dependent regulator of chromatin subfamily B member 1 (SMARCB1) (Homo sapiens (Human)).